Here is a 121-residue protein sequence, read N- to C-terminus: Ribonuclease P protein component (121 aa).

The protein belongs to the RnpA family. In terms of assembly, consists of a catalytic RNA component (M1 or rnpB) and a protein subunit.

The enzyme catalyses Endonucleolytic cleavage of RNA, removing 5'-extranucleotides from tRNA precursor.. Its function is as follows. RNaseP catalyzes the removal of the 5'-leader sequence from pre-tRNA to produce the mature 5'-terminus. It can also cleave other RNA substrates such as 4.5S RNA. The protein component plays an auxiliary but essential role in vivo by binding to the 5'-leader sequence and broadening the substrate specificity of the ribozyme. The polypeptide is Ribonuclease P protein component (Neisseria meningitidis serogroup A / serotype 4A (strain DSM 15465 / Z2491)).